We begin with the raw amino-acid sequence, 227 residues long: Uracil-DNA glycosylase (227 aa).

The active-site Proton acceptor is aspartate 64.

It belongs to the uracil-DNA glycosylase (UDG) superfamily. UNG family.

Its subcellular location is the cytoplasm. It carries out the reaction Hydrolyzes single-stranded DNA or mismatched double-stranded DNA and polynucleotides, releasing free uracil.. In terms of biological role, excises uracil residues from the DNA which can arise as a result of misincorporation of dUMP residues by DNA polymerase or due to deamination of cytosine. In Alkaliphilus metalliredigens (strain QYMF), this protein is Uracil-DNA glycosylase.